We begin with the raw amino-acid sequence, 227 residues long: Octanoyltransferase (227 aa).

One can recognise a BPL/LPL catalytic domain in the interval 34–212; it reads RQREDGLMLL…AFAEVFPVTW (179 aa). Substrate is bound by residues 76 to 83, 143 to 145, and 156 to 158; these read RGGEVTYH, AIA, and GFA. Catalysis depends on Cys174, which acts as the Acyl-thioester intermediate.

Belongs to the LipB family.

Its subcellular location is the cytoplasm. It catalyses the reaction octanoyl-[ACP] + L-lysyl-[protein] = N(6)-octanoyl-L-lysyl-[protein] + holo-[ACP] + H(+). The protein operates within protein modification; protein lipoylation via endogenous pathway; protein N(6)-(lipoyl)lysine from octanoyl-[acyl-carrier-protein]: step 1/2. In terms of biological role, catalyzes the transfer of endogenously produced octanoic acid from octanoyl-acyl-carrier-protein onto the lipoyl domains of lipoate-dependent enzymes. Lipoyl-ACP can also act as a substrate although octanoyl-ACP is likely to be the physiological substrate. The sequence is that of Octanoyltransferase from Synechocystis sp. (strain ATCC 27184 / PCC 6803 / Kazusa).